We begin with the raw amino-acid sequence, 198 residues long: RNA pyrophosphohydrolase (198 aa).

The Nudix hydrolase domain maps to 6 to 149 (GYRPNVGIVI…KKEVYRKAMK (144 aa)). The Nudix box signature appears at 38 to 59 (GGINDNESAEQAMYRELFEEVG).

The protein belongs to the Nudix hydrolase family. RppH subfamily. A divalent metal cation serves as cofactor.

In terms of biological role, accelerates the degradation of transcripts by removing pyrophosphate from the 5'-end of triphosphorylated RNA, leading to a more labile monophosphorylated state that can stimulate subsequent ribonuclease cleavage. The sequence is that of RNA pyrophosphohydrolase from Pasteurella multocida (strain Pm70).